The following is a 245-amino-acid chain: 2,3-bisphosphoglycerate-dependent phosphoglycerate mutase (245 aa).

Residues 9–16 (RHGESEWN), 22–23 (TG), R61, 88–91 (ERHY), K99, 115–116 (RR), and 181–182 (GN) each bind substrate. The active-site Tele-phosphohistidine intermediate is the H10. The active-site Proton donor/acceptor is the E88.

Belongs to the phosphoglycerate mutase family. BPG-dependent PGAM subfamily.

It carries out the reaction (2R)-2-phosphoglycerate = (2R)-3-phosphoglycerate. It functions in the pathway carbohydrate degradation; glycolysis; pyruvate from D-glyceraldehyde 3-phosphate: step 3/5. Its function is as follows. Catalyzes the interconversion of 2-phosphoglycerate and 3-phosphoglycerate. The protein is 2,3-bisphosphoglycerate-dependent phosphoglycerate mutase of Nocardia farcinica (strain IFM 10152).